The following is a 186-amino-acid chain: 3-hydroxyanthranilate 3,4-dioxygenase (186 aa).

O2 is bound at residue Arg44. His48, Glu54, and His96 together coordinate Fe cation. Residue Glu54 participates in substrate binding. Substrate-binding residues include Arg100 and Glu110. Residues Cys125, Cys130, Cys164, and Cys167 each coordinate a divalent metal cation.

It belongs to the 3-HAO family. Fe(2+) is required as a cofactor.

The protein resides in the cytoplasm. The enzyme catalyses 3-hydroxyanthranilate + O2 = (2Z,4Z)-2-amino-3-carboxymuconate 6-semialdehyde. It functions in the pathway cofactor biosynthesis; NAD(+) biosynthesis; quinolinate from L-kynurenine: step 3/3. Catalyzes the oxidative ring opening of 3-hydroxyanthranilate to 2-amino-3-carboxymuconate semialdehyde, which spontaneously cyclizes to quinolinate. This chain is 3-hydroxyanthranilate 3,4-dioxygenase, found in Chaetomium globosum (strain ATCC 6205 / CBS 148.51 / DSM 1962 / NBRC 6347 / NRRL 1970) (Soil fungus).